The following is a 145-amino-acid chain: Large ribosomal subunit protein uL16 (145 aa).

The protein belongs to the universal ribosomal protein uL16 family. As to quaternary structure, part of the 50S ribosomal subunit.

Binds 23S rRNA and is also seen to make contacts with the A and possibly P site tRNAs. This chain is Large ribosomal subunit protein uL16, found in Desulfitobacterium hafniense (strain DSM 10664 / DCB-2).